Reading from the N-terminus, the 217-residue chain is Gas vesicle protein F2 (217 aa).

Belongs to the gas vesicle GvpF/GvpL family. In terms of assembly, binds GvpA.

The protein localises to the gas vesicle. Its subcellular location is the cytoplasm. Its function is as follows. A minor component of the gas vesicle, may be involved in preventing GvpA aggregation during gas vesicle nucleation. Gas vesicles are hollow, gas filled proteinaceous nanostructures found in several microbial planktonic microorganisms. They allow positioning of halobacteria at the optimal depth for growth in the poorly aerated, shallow brine pools of their habitat. In terms of biological role, expression of 2 c-vac DNA fragments containing 2 divergently transcribed regions (gvpE-gvpF-gvpG-gvpH-gvpI-gvpJ-gvpK-gvpL-gvpM and gvpA-gvpC-gvpN-gvpO) allows H.volcanii to produce gas vesicles. Note that gvpD is not necessary for gas vesicle formation. This is Gas vesicle protein F2 from Halobacterium salinarum (strain ATCC 700922 / JCM 11081 / NRC-1) (Halobacterium halobium).